A 293-amino-acid chain; its full sequence is Elongation factor Ts (293 aa).

The segment at 80 to 83 (TDFV) is involved in Mg(2+) ion dislocation from EF-Tu.

Belongs to the EF-Ts family.

It localises to the cytoplasm. Functionally, associates with the EF-Tu.GDP complex and induces the exchange of GDP to GTP. It remains bound to the aminoacyl-tRNA.EF-Tu.GTP complex up to the GTP hydrolysis stage on the ribosome. The chain is Elongation factor Ts from Lacticaseibacillus casei (strain BL23) (Lactobacillus casei).